The sequence spans 939 residues: Isoleucine--tRNA ligase (939 aa).

A 'HIGH' region motif is present at residues 57–67 (PYANGEIHIGH). Position 563 (Glu-563) interacts with L-isoleucyl-5'-AMP. A 'KMSKS' region motif is present at residues 604-608 (KMSKS). Residue Lys-607 participates in ATP binding. Zn(2+) is bound by residues Cys-902, Cys-905, Cys-922, and Cys-925.

This sequence belongs to the class-I aminoacyl-tRNA synthetase family. IleS type 1 subfamily. Monomer. Zn(2+) serves as cofactor.

It localises to the cytoplasm. It catalyses the reaction tRNA(Ile) + L-isoleucine + ATP = L-isoleucyl-tRNA(Ile) + AMP + diphosphate. Its function is as follows. Catalyzes the attachment of isoleucine to tRNA(Ile). As IleRS can inadvertently accommodate and process structurally similar amino acids such as valine, to avoid such errors it has two additional distinct tRNA(Ile)-dependent editing activities. One activity is designated as 'pretransfer' editing and involves the hydrolysis of activated Val-AMP. The other activity is designated 'posttransfer' editing and involves deacylation of mischarged Val-tRNA(Ile). The sequence is that of Isoleucine--tRNA ligase from Methylococcus capsulatus (strain ATCC 33009 / NCIMB 11132 / Bath).